We begin with the raw amino-acid sequence, 353 residues long: Photosystem II D2 protein (353 aa).

Position 2 is an N-acetylthreonine (Thr-2). Thr-2 carries the phosphothreonine modification. Residues 41 to 61 form a helical membrane-spanning segment; sequence CAYFALGGWFTGTTFVTSWYT. Residue His-118 coordinates chlorophyll a. A helical transmembrane segment spans residues 125–141; it reads GFMLRQFELARSVQLRP. Residues Gln-130 and Asn-143 each contribute to the pheophytin a site. A helical transmembrane segment spans residues 153–166; that stretch reads VFVSVFLIYPLGQS. His-198 contributes to the chlorophyll a binding site. The helical transmembrane segment at 208 to 228 threads the bilayer; the sequence is AALLCAIHGATVENTLFEDGD. The a plastoquinone site is built by His-215 and Phe-262. A Fe cation-binding site is contributed by His-215. Position 269 (His-269) interacts with Fe cation. The helical transmembrane segment at 279–295 threads the bilayer; that stretch reads GLWMSALGVVGLALNLR.

It belongs to the reaction center PufL/M/PsbA/D family. In terms of assembly, PSII is composed of 1 copy each of membrane proteins PsbA, PsbB, PsbC, PsbD, PsbE, PsbF, PsbH, PsbI, PsbJ, PsbK, PsbL, PsbM, PsbT, PsbX, PsbY, PsbZ, Psb30/Ycf12, at least 3 peripheral proteins of the oxygen-evolving complex and a large number of cofactors. It forms dimeric complexes. The D1/D2 heterodimer binds P680, chlorophylls that are the primary electron donor of PSII, and subsequent electron acceptors. It shares a non-heme iron and each subunit binds pheophytin, quinone, additional chlorophylls, carotenoids and lipids. There is also a Cl(-1) ion associated with D1 and D2, which is required for oxygen evolution. The PSII complex binds additional chlorophylls, carotenoids and specific lipids. is required as a cofactor.

Its subcellular location is the plastid. It localises to the chloroplast thylakoid membrane. The enzyme catalyses 2 a plastoquinone + 4 hnu + 2 H2O = 2 a plastoquinol + O2. Functionally, photosystem II (PSII) is a light-driven water:plastoquinone oxidoreductase that uses light energy to abstract electrons from H(2)O, generating O(2) and a proton gradient subsequently used for ATP formation. It consists of a core antenna complex that captures photons, and an electron transfer chain that converts photonic excitation into a charge separation. The D1/D2 (PsbA/PsbD) reaction center heterodimer binds P680, the primary electron donor of PSII as well as several subsequent electron acceptors. D2 is needed for assembly of a stable PSII complex. In Nandina domestica (Heavenly bamboo), this protein is Photosystem II D2 protein.